The chain runs to 449 residues: UDP-N-acetylmuramoylalanine--D-glutamate ligase (449 aa).

107–113 is a binding site for ATP; sequence GSNGKST.

Belongs to the MurCDEF family.

It is found in the cytoplasm. The catalysed reaction is UDP-N-acetyl-alpha-D-muramoyl-L-alanine + D-glutamate + ATP = UDP-N-acetyl-alpha-D-muramoyl-L-alanyl-D-glutamate + ADP + phosphate + H(+). Its pathway is cell wall biogenesis; peptidoglycan biosynthesis. In terms of biological role, cell wall formation. Catalyzes the addition of glutamate to the nucleotide precursor UDP-N-acetylmuramoyl-L-alanine (UMA). The chain is UDP-N-acetylmuramoylalanine--D-glutamate ligase from Hydrogenovibrio crunogenus (strain DSM 25203 / XCL-2) (Thiomicrospira crunogena).